A 327-amino-acid chain; its full sequence is Zinc transport protein ZntB (327 aa).

Residues 1–273 (MDAIKGSELQ…ARRTYTMSLM (273 aa)) lie on the Cytoplasmic side of the membrane. A helical membrane pass occupies residues 274–294 (AMVFLPSTFLTGLFGVNLGGI). Residues 295 to 300 (PGNSWH) lie on the Periplasmic side of the membrane. The chain crosses the membrane as a helical span at residues 301 to 321 (LGFSLFCLMLVVVIGGVAWWL). The Cytoplasmic segment spans residues 322 to 327 (HRSKWL).

Belongs to the CorA metal ion transporter (MIT) (TC 1.A.35) family.

The protein localises to the cell inner membrane. The enzyme catalyses Zn(2+)(out) + H(+)(out) = Zn(2+)(in) + H(+)(in). In terms of biological role, zinc transporter. Acts as a Zn(2+):proton symporter, which likely mediates zinc ion uptake. This chain is Zinc transport protein ZntB, found in Klebsiella pneumoniae subsp. pneumoniae (strain ATCC 700721 / MGH 78578).